The primary structure comprises 259 residues: Ribonuclease PH (259 aa).

Residues Arg-88 and 126–128 each bind phosphate; that span reads GTR.

It belongs to the RNase PH family. Homohexameric ring arranged as a trimer of dimers.

It catalyses the reaction tRNA(n+1) + phosphate = tRNA(n) + a ribonucleoside 5'-diphosphate. Phosphorolytic 3'-5' exoribonuclease that plays an important role in tRNA 3'-end maturation. Removes nucleotide residues following the 3'-CCA terminus of tRNAs; can also add nucleotides to the ends of RNA molecules by using nucleoside diphosphates as substrates, but this may not be physiologically important. Probably plays a role in initiation of 16S rRNA degradation (leading to ribosome degradation) during starvation. This chain is Ribonuclease PH, found in Mycolicibacterium smegmatis (strain ATCC 700084 / mc(2)155) (Mycobacterium smegmatis).